The primary structure comprises 710 residues: Polyribonucleotide nucleotidyltransferase (710 aa).

Residues D486 and D492 each coordinate Mg(2+). Positions 553-612 constitute a KH domain; that stretch reads PRIHTIKISVDKIKDVIGKGGSVIRALTEETGTTIEIEDDGTVKIAATDGDKAKFAIRRI. Positions 622 to 690 constitute an S1 motif domain; it reads GRIYNGKVTR…RQGRVRLSIK (69 aa). The disordered stretch occupies residues 690–710; that stretch reads KEAGEQAQPEAEAVPAAPEAE. Positions 694–710 are enriched in low complexity; the sequence is EQAQPEAEAVPAAPEAE.

This sequence belongs to the polyribonucleotide nucleotidyltransferase family. Component of the RNA degradosome, which is a multiprotein complex involved in RNA processing and mRNA degradation. It depends on Mg(2+) as a cofactor.

It is found in the cytoplasm. It catalyses the reaction RNA(n+1) + phosphate = RNA(n) + a ribonucleoside 5'-diphosphate. Its function is as follows. Involved in mRNA degradation. Catalyzes the phosphorolysis of single-stranded polyribonucleotides processively in the 3'- to 5'-direction. This is Polyribonucleotide nucleotidyltransferase from Erwinia tasmaniensis (strain DSM 17950 / CFBP 7177 / CIP 109463 / NCPPB 4357 / Et1/99).